The chain runs to 157 residues: Small ribosomal subunit protein uS7 (157 aa).

It belongs to the universal ribosomal protein uS7 family. In terms of assembly, part of the 30S ribosomal subunit. Contacts proteins S9 and S11.

Functionally, one of the primary rRNA binding proteins, it binds directly to 16S rRNA where it nucleates assembly of the head domain of the 30S subunit. Is located at the subunit interface close to the decoding center, probably blocks exit of the E-site tRNA. The chain is Small ribosomal subunit protein uS7 from Roseiflexus castenholzii (strain DSM 13941 / HLO8).